We begin with the raw amino-acid sequence, 122 residues long: MGLFSKRQIGNQYETLAKQYLQRQGLRFLDQNFLTKVGEIDLIFQQGETIVFVEVKYRKNDSFGSAAEMVTRAKMRKLVKTAQIWLSQQKRSAYNIDYRFDVVAIHDSGRDINWIQNAISEG.

It belongs to the UPF0102 family.

This Vibrio campbellii (strain ATCC BAA-1116) protein is UPF0102 protein VIBHAR_00890.